We begin with the raw amino-acid sequence, 104 residues long: NADH dehydrogenase [ubiquinone] flavoprotein 3, mitochondrial (104 aa).

Residues 1-35 (MAVSLLLRGGRIRALKAVLLEARVFPGELVSVVRL) constitute a mitochondrion transit peptide. Basic and acidic residues predominate over residues 38–50 (ESEKSAKEKELHP). Residues 38–68 (ESEKSAKEKELHPKTQSVLKEPEPTDTTTYK) are disordered. Residue serine 101 is modified to Phosphoserine.

It belongs to the complex I NDUFV3 subunit family. As to quaternary structure, complex I is composed of 45 different subunits. This is a component of the flavoprotein-sulfur (FP) fragment of the enzyme.

Its subcellular location is the mitochondrion inner membrane. In terms of biological role, accessory subunit of the mitochondrial membrane respiratory chain NADH dehydrogenase (Complex I), that is believed not to be involved in catalysis. Complex I functions in the transfer of electrons from NADH to the respiratory chain. The immediate electron acceptor for the enzyme is believed to be ubiquinone. May be the terminally assembled subunit of Complex I. This chain is NADH dehydrogenase [ubiquinone] flavoprotein 3, mitochondrial (Ndufv3), found in Mus musculus (Mouse).